The primary structure comprises 357 residues: Protein pelota homolog (357 aa).

The protein belongs to the eukaryotic release factor 1 family. Pelota subfamily. In terms of assembly, monomer. A divalent metal cation serves as cofactor.

The protein resides in the cytoplasm. May function in recognizing stalled ribosomes, interact with stem-loop structures in stalled mRNA molecules, and effect endonucleolytic cleavage of the mRNA. May play a role in the release non-functional ribosomes and degradation of damaged mRNAs. Has endoribonuclease activity. The chain is Protein pelota homolog from Thermococcus kodakarensis (strain ATCC BAA-918 / JCM 12380 / KOD1) (Pyrococcus kodakaraensis (strain KOD1)).